Here is a 208-residue protein sequence, read N- to C-terminus: Large ribosomal subunit protein uL4 (208 aa).

The tract at residues 46-97 (QGTHKTKTRAEVRGGGKKPYRQKGTGNARQGSSRSPIMVGGGTIFGPQPRSY) is disordered. The span at 69–80 (GTGNARQGSSRS) shows a compositional bias: polar residues.

It belongs to the universal ribosomal protein uL4 family. Part of the 50S ribosomal subunit.

Functionally, one of the primary rRNA binding proteins, this protein initially binds near the 5'-end of the 23S rRNA. It is important during the early stages of 50S assembly. It makes multiple contacts with different domains of the 23S rRNA in the assembled 50S subunit and ribosome. In terms of biological role, forms part of the polypeptide exit tunnel. The polypeptide is Large ribosomal subunit protein uL4 (Chlorobaculum parvum (strain DSM 263 / NCIMB 8327) (Chlorobium vibrioforme subsp. thiosulfatophilum)).